Reading from the N-terminus, the 23-residue chain is Retinol-binding protein 3 (23 aa).

Its subcellular location is the secreted. It localises to the extracellular space. It is found in the extracellular matrix. The protein localises to the interphotoreceptor matrix. In terms of biological role, IRBP shuttles 11-cis and all trans retinoids between the retinol isomerase in the pigment epithelium and the visual pigments in the photoreceptor cells of the retina. The chain is Retinol-binding protein 3 (RBP3) from Oryctolagus cuniculus (Rabbit).